The chain runs to 90 residues: Probable Fe(2+)-trafficking protein (90 aa).

Belongs to the Fe(2+)-trafficking protein family.

Functionally, could be a mediator in iron transactions between iron acquisition and iron-requiring processes, such as synthesis and/or repair of Fe-S clusters in biosynthetic enzymes. The protein is Probable Fe(2+)-trafficking protein of Verminephrobacter eiseniae (strain EF01-2).